Reading from the N-terminus, the 224-residue chain is Flagellar L-ring protein (224 aa).

The signal sequence occupies residues 1 to 15 (MLRYLMVGSLLVLAG). The N-palmitoyl cysteine moiety is linked to residue C16. Residue C16 is the site of S-diacylglycerol cysteine attachment.

This sequence belongs to the FlgH family. The basal body constitutes a major portion of the flagellar organelle and consists of four rings (L,P,S, and M) mounted on a central rod.

The protein localises to the cell outer membrane. Its subcellular location is the bacterial flagellum basal body. Assembles around the rod to form the L-ring and probably protects the motor/basal body from shearing forces during rotation. This Shewanella amazonensis (strain ATCC BAA-1098 / SB2B) protein is Flagellar L-ring protein.